The chain runs to 765 residues: Complement factor B (765 aa).

An N-terminal signal peptide occupies residues 1-25 (MGSNRCPRLGLVPLILGLLSGGVSM). Sushi domains are found at residues 35–100 (SPCS…ECKA), 101–160 (IRCP…ICDD), and 163–220 (GYCP…SCQD). 6 disulfides stabilise this stretch: C37–C76, C62–C98, C103–C145, C131–C158, C165–C205, and C191–C218. N-linked (GlcNAc...) asparagine glycans are attached at residues N122 and N142. The region spanning 270-469 (NIYLVLDGSD…NLEDVFFQML (200 aa)) is the VWFA domain. The Mg(2+) site is built by S278 and S280. An N-linked (GlcNAc...) asparagine glycan is attached at N285. Mg(2+) is bound at residue T353. N378 carries N-linked (GlcNAc...) asparagine glycosylation. The Peptidase S1 domain maps to 477-758 (LCGMVWEHKD…VLPWLKEKLK (282 aa)). Cystine bridges form between C478-C596, C511-C527, C599-C615, C660-C686, and C699-C729. Active-site charge relay system residues include H526 and D576. Residue S703 is the Charge relay system of the active site.

Belongs to the peptidase S1 family. In terms of assembly, monomer. Interacts with complement C3b; this interaction is dependent on the presence of Mg(2+). As to quaternary structure, catalytic component of the C3 convertase of the alternative complement pathway, also named C3bBb, composed of complement factor B Bb and complement C3b. Catalytic component of the C5 convertase of the alternative complement pathway, also named C3bBb3b, composed of complement factor B Bb and additional molecules of complement C3b. Interacts to CFP; this interaction contributes to the stabilization of the active C3-convertase enzyme complex. Requires Mg(2+) as cofactor. Mn(2+) serves as cofactor. Post-translationally, cleaved by CFD following activation of the alternative complement system, generating Ba and Bb chains. Cleavage and activation takes place when CFB is already associated with complement C3b.

The protein resides in the secreted. The protein localises to the cell surface. It carries out the reaction Cleavage of Arg-|-Ser bond in complement component C3 alpha-chain to yield C3a and C3b, and Arg-|-Xaa bond in complement component C5 alpha-chain to yield C5a and C5b.. In terms of biological role, precursor of the catalytic component of the C3 and C5 convertase complexes of the alternative pathway of the complement system, a cascade of proteins that leads to phagocytosis and breakdown of pathogens and signaling that strengthens the adaptive immune system. The alternative complement pathway acts as an amplification loop that enhances other complement pathways (classical, lectin and GZMK) by promoting formation of additional C3 and C5 convertases. CFB is cleaved and activated by CFD to generate Ba and Bb chains; Bb chain constituting the catalytic component of the C3 and C5 convertases. Functionally, serine protease component of the complement C3 and C5 convertase complexes of the alternative complement pathway. Following cleavage and activation by factor D (CFD), forms the C3 convertase together with complement C3b. As part of the C3 convertase, cleaves and activates C3 into C3a anaphylatoxin and C3b opsonin, the next components of the complement pathways. When an additional complement C3b molecule binds to the C3 convertase, forms the C5 convertase, which cleaves and activates C5 into C5a anaphylatoxin and C5b component of the membrane attack complex. Involved in proliferation and differentiation of preactivated B-lymphocytes, rapid spreading of peripheral blood monocytes, stimulation of lymphocyte blastogenesis and lysis of erythrocytes. This is Complement factor B (CFB) from Sus scrofa (Pig).